A 423-amino-acid chain; its full sequence is UPF0229 protein PST_0721 (423 aa).

The disordered stretch occupies residues 84 to 109; sequence AGERIPRPQGGGGGQGAGQASNSGEG.

Belongs to the UPF0229 family.

The polypeptide is UPF0229 protein PST_0721 (Stutzerimonas stutzeri (strain A1501) (Pseudomonas stutzeri)).